The chain runs to 192 residues: Calcium-binding protein K (192 aa).

2 consecutive EF-hand domains span residues 60–95 (WDEASMVRMFTLFDSDGNGVIDVKEFITALYLMAKA) and 96–131 (PTLDKLGFFFDLFDSDKSGYLEREEVDKLVNIVVCC). Residues aspartate 73, aspartate 75, asparagine 77, glutamate 84, aspartate 109, aspartate 111, serine 113, tyrosine 115, and glutamate 120 each contribute to the Ca(2+) site.

This sequence belongs to the recoverin family.

This Dictyostelium discoideum (Social amoeba) protein is Calcium-binding protein K (cbpK).